The following is a 181-amino-acid chain: Transcriptional repressor NrdR (181 aa).

The segment at 3-34 (CPFCRHPDSRVVDSREAEEGSAIRRRRSCLSC) is a zinc-finger region. An ATP-cone domain is found at 46–136 (LQVRKRSGAA…VYLAFESLTD (91 aa)). Positions 148–181 (AAGPPTTRDGPARPVPRGAVDVSPVIGTQQVHSR) are disordered.

The protein belongs to the NrdR family. Zn(2+) is required as a cofactor.

Negatively regulates transcription of bacterial ribonucleotide reductase nrd genes and operons by binding to NrdR-boxes. In Frankia casuarinae (strain DSM 45818 / CECT 9043 / HFP020203 / CcI3), this protein is Transcriptional repressor NrdR.